We begin with the raw amino-acid sequence, 878 residues long: DNA gyrase subunit A (878 aa).

Residues 34–533 (LPDVRDGLKP…NSADINIEDL (500 aa)) enclose the Topo IIA-type catalytic domain. Y122 (O-(5'-phospho-DNA)-tyrosine intermediate) is an active-site residue. The GyrA-box signature appears at 560–566 (QRRGGKG). The disordered stretch occupies residues 844–878 (DDEELDAIDGSVAEGDEDIAPEAESDDDVADDADE). Over residues 857-878 (EGDEDIAPEAESDDDVADDADE) the composition is skewed to acidic residues.

The protein belongs to the type II topoisomerase GyrA/ParC subunit family. In terms of assembly, heterotetramer, composed of two GyrA and two GyrB chains. In the heterotetramer, GyrA contains the active site tyrosine that forms a transient covalent intermediate with DNA, while GyrB binds cofactors and catalyzes ATP hydrolysis.

It localises to the cytoplasm. It catalyses the reaction ATP-dependent breakage, passage and rejoining of double-stranded DNA.. In terms of biological role, a type II topoisomerase that negatively supercoils closed circular double-stranded (ds) DNA in an ATP-dependent manner to modulate DNA topology and maintain chromosomes in an underwound state, and also catalyzes the interconversion of other topological isomers of double-stranded DNA rings, including catenanes and knotted rings. Replenishes negative supercoiling downstream of highly transcribed genes to help control overall chromosomal supercoiling density. E.coli makes 15% more negative supercoils in pBR322 plasmid DNA than S.typhimurium; the S.typhimurium GyrB subunit is toxic in E.coli, while the E.coli copy can be expressed in S.typhimurium even though the 2 subunits have 777/804 residues identical. Its function is as follows. Negative supercoiling favors strand separation, and DNA replication, transcription, recombination and repair, all of which involve strand separation. Type II topoisomerases break and join 2 DNA strands simultaneously in an ATP-dependent manner. The sequence is that of DNA gyrase subunit A from Salmonella typhimurium (strain LT2 / SGSC1412 / ATCC 700720).